Consider the following 241-residue polypeptide: MSGSNREAALAGQPKDERKKSGGGVINRLKARRVQGKESGTSDQSSITRFREEELLGLNELRPEHVLGLSRVTDNYLCKPEDNIFGIDFTRFKIRDLETGTVLFEISKPCSEQEEEEESTHLDASAGRFVRYQFTPAFLRLRKVGATVEFTVGDKPVKSFRMIERHYFRDRILKSFDFDFGFCIPNSRNTCEHMYEFPQLSEELIRLMTENPYETRSDSFYFVDNKLIMHNKADYAYNGGQ.

Residues 1–46 are disordered; the sequence is MSGSNREAALAGQPKDERKKSGGGVINRLKARRVQGKESGTSDQSS. Residue Tyr-132 participates in tetradecanoate binding.

The protein belongs to the PDE6D/unc-119 family.

The protein localises to the cell projection. It is found in the cilium. In terms of biological role, myristoyl-binding protein that acts as a cargo adapter: specifically binds the myristoyl moiety of a subset of N-terminally myristoylated proteins and is required for their localization. Plays a key role in localization of proteins to the primary cilium membrane. This chain is Protein unc-119 homolog B-B (unc119b-b), found in Xenopus laevis (African clawed frog).